A 495-amino-acid polypeptide reads, in one-letter code: Inner membrane ALBINO3-like protein 1, chloroplastic (495 aa).

Residues 76 to 96 (LGAIYVLADASASTAAAAVMP) form a helical membrane-spanning segment. Over 97-206 (TAVDSAAGAA…VLYEQAGVNP (110 aa)) the chain is Stromal. The chain crosses the membrane as a helical span at residues 207-227 (LAGCLPTLATIPIFIGLFSSL). Topologically, residues 228–273 (TNVANDGLLDTQGFYFVPSLAGPTTMAMRQSGLGTSWLWPLGPDGA) are lumenal. A helical membrane pass occupies residues 274-294 (PPIGWEDAAAYLTLPLLLVAV). At 295-317 (QYASSSVTSPPIDPKDENANTQR) the chain is on the stromal side. The chain crosses the membrane as a helical span at residues 318 to 338 (ALLVFLPLMVGWFSLNVPAGL). Residues 339-441 (SLYYLANTVL…ASVSLSVDDS (103 aa)) lie on the Lumenal side of the membrane. The helical transmembrane segment at 442 to 462 (TAAIAGTATMAVTAGAPAAAM) threads the bilayer. At 463-495 (DPSKVNRRCKRRRLTSLVQDGSTASAAVAGASA) the chain is on the stromal side.

This sequence belongs to the OXA1/ALB3/YidC (TC 2.A.9.2) family. Associates with the LHCII complex and with the psaE subunit of the LHCI complex.

Its subcellular location is the plastid. The protein resides in the chloroplast thylakoid membrane. In terms of biological role, required for the insertion of some light-harvesting complexes (LHC) proteins into the chloroplast thylakoid membrane. Essential for the assembly and activity of LHC I and II. Its function is probably partly distinct from that of ALB3.2. The sequence is that of Inner membrane ALBINO3-like protein 1, chloroplastic (ALB3.1) from Chlamydomonas reinhardtii (Chlamydomonas smithii).